The following is a 203-amino-acid chain: Large ribosomal subunit protein bL25 (203 aa).

Belongs to the bacterial ribosomal protein bL25 family. CTC subfamily. In terms of assembly, part of the 50S ribosomal subunit; part of the 5S rRNA/L5/L18/L25 subcomplex. Contacts the 5S rRNA. Binds to the 5S rRNA independently of L5 and L18.

This is one of the proteins that binds to the 5S RNA in the ribosome where it forms part of the central protuberance. The sequence is that of Large ribosomal subunit protein bL25 from Cupriavidus metallidurans (strain ATCC 43123 / DSM 2839 / NBRC 102507 / CH34) (Ralstonia metallidurans).